Here is a 1727-residue protein sequence, read N- to C-terminus: DNA-directed RNA polymerase II subunit rpb1 (1727 aa).

The Zn(2+) site is built by Cys-66, Cys-69, Cys-76, His-79, Cys-106, Cys-109, Cys-147, and Cys-175. Mg(2+) contacts are provided by Asp-486, Asp-488, and Asp-490. The tract at residues 819-831 is bridging helix; it reads PQEFFFHAMGGRE. A Glycyl lysine isopeptide (Lys-Gly) (interchain with G-Cter in ubiquitin) cross-link involves residue Lys-1266. Disordered stretches follow at residues 1478–1512 and 1551–1727; these read EPSN…YDAP and PTYS…NKKK. Residues 1480-1505 show a composition bias toward polar residues; the sequence is SNVSYPDTPGSQTPSYSYGDGSTTPF. 23 tandem repeats follow at residues 1553–1559, 1560–1566, 1567–1573, 1574–1580, 1581–1587, 1588–1594, 1595–1601, 1602–1608, 1609–1615, 1616–1622, 1623–1629, 1630–1636, 1637–1643, 1644–1650, 1651–1657, 1658–1664, 1665–1671, 1672–1678, 1679–1685, 1686–1692, 1693–1699, 1700–1706, and 1707–1713. The segment at 1553-1713 is C-terminal domain (CTD); 23 X 7 AA tandem repeats of Y-S-P-[ST]-S-P-[FST]; that stretch reads YSPTSPSYSP…SPSYSPSSPT (161 aa).

This sequence belongs to the RNA polymerase beta' chain family. As to quaternary structure, component of the RNA polymerase II (Pol II) complex consisting of 12 subunits. The tandem heptapeptide repeats in the C-terminal domain (CTD) can be highly phosphorylated. The phosphorylation activates Pol II. Phosphorylation occurs mainly at residues 'Ser-2' and 'Ser-5' of the heptapeptide repeat. The phosphorylation state is believed to result from the balanced action of site-specific CTD kinases and phosphatase, and a 'CTD code' that specifies the position of Pol II within the transcription cycle has been proposed. Post-translationally, following transcription stress, the elongating form of RNA polymerase II (RNA pol IIo) is polyubiquitinated via 'Lys-63'-linkages on Lys-1266 at DNA damage sites without leading to degradation: ubiquitination promotes RNA pol IIo backtracking to allow access by the transcription-coupled nucleotide excision repair (TC-NER) machinery. Subsequent DEF1-dependent polyubiquitination by the elongin complex via 'Lys-48'-linkages may lead to proteasome-mediated degradation; presumably at stalled RNA pol II where TC-NER has failed, to halt global transcription and enable 'last resort' DNA repair pathways.

Its subcellular location is the nucleus. The catalysed reaction is RNA(n) + a ribonucleoside 5'-triphosphate = RNA(n+1) + diphosphate. Its function is as follows. DNA-dependent RNA polymerase catalyzes the transcription of DNA into RNA using the four ribonucleoside triphosphates as substrates. Largest and catalytic component of RNA polymerase II which synthesizes mRNA precursors and many functional non-coding RNAs. Forms the polymerase active center together with the second largest subunit. Pol II is the central component of the basal RNA polymerase II transcription machinery. It is composed of mobile elements that move relative to each other. RPB1 is part of the core element with the central large cleft, the clamp element that moves to open and close the cleft and the jaws that are thought to grab the incoming DNA template. At the start of transcription, a single-stranded DNA template strand of the promoter is positioned within the central active site cleft of Pol II. A bridging helix emanates from RPB1 and crosses the cleft near the catalytic site and is thought to promote translocation of Pol II by acting as a ratchet that moves the RNA-DNA hybrid through the active site by switching from straight to bent conformations at each step of nucleotide addition. During transcription elongation, Pol II moves on the template as the transcript elongates. Elongation is influenced by the phosphorylation status of the C-terminal domain (CTD) of Pol II largest subunit (RPB1), which serves as a platform for assembly of factors that regulate transcription initiation, elongation, termination and mRNA processing. The protein is DNA-directed RNA polymerase II subunit rpb1 (polr2a) of Dictyostelium discoideum (Social amoeba).